A 152-amino-acid chain; its full sequence is Small ribosomal subunit protein uS19x (152 aa).

Belongs to the universal ribosomal protein uS19 family.

The protein resides in the cytoplasm. This chain is Small ribosomal subunit protein uS19x (RPS15D), found in Arabidopsis thaliana (Mouse-ear cress).